Consider the following 162-residue polypeptide: uncharacterized protein (162 aa).

The next 4 membrane-spanning stretches (helical) occupy residues 15–35, 43–63, 70–90, and 97–117; these read VLAI…APAL, VCHF…FDLS, LTIL…QSFL, and LFDI…NILY.

The protein localises to the membrane. This is an uncharacterized protein from Schizosaccharomyces pombe (strain 972 / ATCC 24843) (Fission yeast).